A 1327-amino-acid chain; its full sequence is Vascular endothelial growth factor receptor 1 (1327 aa).

Positions 1–24 (MPRQLLSGTVLLGAAFLLAGSTSG) are cleaved as a signal peptide. Residues 25 to 749 (SKLKVPVLSV…GTVERSNLEL (725 aa)) are Extracellular-facing. 7 consecutive Ig-like C2-type domains span residues 30–121 (PVLS…SIVY), 120–222 (VYVF…HRET), 227–323 (DIKL…TTVI), 331–417 (NLKR…LTVT), 424–545 (PQIY…RNVS), 552–644 (PSGF…KDVS), and 651–737 (PALL…AYVT). Asparagine 48, asparagine 73, asparagine 82, asparagine 98, and asparagine 125 each carry an N-linked (GlcNAc...) asparagine glycan. A disulfide bond links cysteine 51 and cysteine 105. Cysteine 154 and cysteine 203 are disulfide-bonded. Asparagine 247 carries an N-linked (GlcNAc...) asparagine glycan. Residues cysteine 248 and cysteine 307 are joined by a disulfide bond. Residues asparagine 319, asparagine 383, asparagine 398, asparagine 409, asparagine 413, asparagine 470, asparagine 512, asparagine 543, asparagine 593, asparagine 615, and asparagine 663 are each glycosylated (N-linked (GlcNAc...) asparagine). Cysteine 450 and cysteine 531 are joined by a disulfide. Cysteine 573 and cysteine 626 form a disulfide bridge. A disulfide bond links cysteine 672 and cysteine 721. Residues 750–770 (ITLTCTCVAATLFWLLLTLFI) form a helical membrane-spanning segment. The Cytoplasmic segment spans residues 771–1327 (RKLKRPYFSE…SVVHYSQPSI (557 aa)). A Protein kinase domain is found at 819-1151 (LKLGKSLGHG…ELVKRLGDLL (333 aa)). Residues 825-833 (LGHGAFGKV) and lysine 853 each bind ATP. Residues 950–971 (ASVTSSESFASSGFQEDKSLSD) form a disordered region. Low complexity predominate over residues 951–961 (SVTSSESFASS). Aspartate 1015 (proton acceptor) is an active-site residue. Tyrosine 1046, tyrosine 1162, tyrosine 1202, tyrosine 1231, tyrosine 1316, and tyrosine 1322 each carry phosphotyrosine; by autocatalysis.

The protein belongs to the protein kinase superfamily. Tyr protein kinase family. CSF-1/PDGF receptor subfamily. Interacts with VEGFA, VEGFB and PGF. Monomer in the absence of bound VEGFA, VEGFB or PGF. Homodimer in the presence of bound VEGFA, VEGFB and PGF. Autophosphorylated on tyrosine residues upon ligand binding.

The protein localises to the cell membrane. The protein resides in the endosome. It is found in the secreted. The catalysed reaction is L-tyrosyl-[protein] + ATP = O-phospho-L-tyrosyl-[protein] + ADP + H(+). With respect to regulation, present in an inactive conformation in the absence of bound ligand. Binding of VEGFA, VEGFB or PGF leads to dimerization and activation by autophosphorylation on tyrosine residues. Tyrosine-protein kinase that acts as a cell-surface receptor for VEGFA, VEGFB and PGF, and plays an essential role in the regulation of angiogenesis, cell survival, cell migration, macrophage function, and chemotaxis. Acts as a positive regulator of postnatal retinal hyaloid vessel regression. Has very high affinity for VEGFA and relatively low protein kinase activity; may function as a negative regulator of VEGFA signaling by limiting the amount of free VEGFA and preventing its binding to KDR. Ligand binding leads to the activation of several signaling cascades. Activation of PLCG1 leads to the production of the cellular signaling molecules diacylglycerol and inositol 1,4,5-trisphosphate and the activation of protein kinase C. Mediates phosphorylation of PIK3R1, the regulatory subunit of phosphatidylinositol 3-kinase, leading to activation of phosphatidylinositol kinase and the downstream signaling pathway. Mediates activation of MAPK1/ERK2, MAPK3/ERK1 and the MAP kinase signaling pathway, as well as of the AKT1 signaling pathway. Phosphorylates PLCG1. Promotes phosphorylation of AKT1 and CBL. The protein is Vascular endothelial growth factor receptor 1 (FLT1) of Gallus gallus (Chicken).